A 378-amino-acid polypeptide reads, in one-letter code: Phosphoglycerate kinase (378 aa).

V1, D2, F3, N4, N16, R17, S40, H41, G43, R44, L99, R100, H147, and R148 together coordinate (2R)-3-phosphoglycerate. An ADP-binding site is contributed by G191. G191 lines the CDP pocket. AMP-binding residues include A192 and K193. A192 serves as a coordination point for ATP. Position 192 (A192) interacts with Mg(2+). D196 is a binding site for CDP. Residue D196 participates in Mg(2+) binding. Position 197 (K197) interacts with AMP. K197 serves as a coordination point for ATP. G215 is an ADP binding site. CDP is bound at residue G215. G216 and G288 together coordinate AMP. Residues G216 and G288 each coordinate ATP. CDP contacts are provided by G313 and F318. F318 serves as a coordination point for ADP. Residue E319 participates in AMP binding. The ATP site is built by E319, D351, and T352. D351 serves as a coordination point for Mg(2+).

The protein belongs to the phosphoglycerate kinase family. As to quaternary structure, monomer. It depends on Mg(2+) as a cofactor.

It carries out the reaction (2R)-3-phosphoglycerate + ATP = (2R)-3-phospho-glyceroyl phosphate + ADP. Its pathway is carbohydrate degradation; glycolysis; pyruvate from D-glyceraldehyde 3-phosphate: step 2/5. The protein is Phosphoglycerate kinase (PGK) of Condylostoma magnum.